The primary structure comprises 608 residues: MKTFSVTKSSVVFAMALGMASTAFAQDFCSNAQHSGQKVTITSNQTGKIGDIGYELWDENGHGGSATFYSDGSMDCNITGAKDYLCRAGLSLGSNKTYKELGGDMIAEFKLVKSGAQNVGYSYIGIYGWMEGVSGTPSQLVEYYVIDNTLANDMPGSWIGNERKGTITVDGGTYTVYRNTRTGPAIKNSGNVTFYQYFSVRTSPRDCGTINISEHMRQWEKMGLTMGKLYEAKVLGEAGNVNGEVRGGHMDFPHAKVYVKNGSDPVSSSSVKSSSSTDAPKSSSSKGNGNVSGKIDACKDVMGHEGKETRTQGQNNSSVTGNVGSSPYHYEIWYQGGNNSMTFYDNGTYKASWNGTNDFLARVGFKYDEKHTYEELGPIDAYYKWSKQGSAGGYNYIGIYGWTVDPLVEYYIVDDWFNKPGANLLGQRKGEFTVDGDTYEIWQNTRVQQPSIKGTQTFPQYFSVRKSARSCGHIDITAHMKKWEELGMKMGKMYEAKVLVEAGGGSGSFDVTYFKMTDKAHPLAQPEPESSSSEAKVESSSSTVALHAAPKMELKSGNFQVFDMQGRFLGTVKLDAGASVAQVLKANFKNAGIYMVKQGNFMQRVAVK.

Positions Met1 to Ala25 are cleaved as a signal peptide. The 211-residue stretch at Thr40–Met250 folds into the GH11 1 domain. The Nucleophile role is filled by Glu142. Glu237 serves as the catalytic Proton donor. The span at Ser263 to Lys294 shows a compositional bias: low complexity. Positions Ser263–Asp296 are disordered. The region spanning Asn316–Phe514 is the GH11 2 domain. Catalysis depends on Glu409, which acts as the Nucleophile. Residue Glu501 is the Proton donor of the active site. The tract at residues Ala520 to Ser539 is disordered. Residues Glu527–Ser539 show a composition bias toward low complexity.

It belongs to the glycosyl hydrolase 11 (cellulase G) family.

The catalysed reaction is Endohydrolysis of (1-&gt;4)-beta-D-xylosidic linkages in xylans.. The protein operates within glycan degradation; xylan degradation. Cleaves xylans with the production of xylose, xylobiose and xylo-oligosaccharides. In Fibrobacter succinogenes (strain ATCC 19169 / S85), this protein is Endo-1,4-beta-xylanase C (xynC).